Consider the following 68-residue polypeptide: Small proline-rich protein 2K (68 aa).

A 1; truncated repeat occupies 21-26; the sequence is PKPCSP. The interval 21–65 is 3.5 X 9 AA approximate tandem repeats; it reads PKPCSPPKCPEPCPPPKCPETCPPQPCQRKCPPVLEAPCQQKCPS. Repeat copies occupy residues 27-35, 36-44, and 45-53.

This sequence belongs to the cornifin (SPRR) family. Not expressed in uterus.

The protein resides in the cytoplasm. Its function is as follows. Cross-linked envelope protein of keratinocytes. It is a keratinocyte protein that first appears in the cell cytosol, but ultimately becomes cross-linked to membrane proteins by transglutaminase. All that results in the formation of an insoluble envelope beneath the plasma membrane. The sequence is that of Small proline-rich protein 2K (Sprr2k) from Mus musculus (Mouse).